Here is a 186-residue protein sequence, read N- to C-terminus: Interferon lambda-3 (186 aa).

An N-terminal signal peptide occupies residues 1–21 (MVCYGVTIILVGTLGSLLVGA). Intrachain disulfides connect C31–C128, C65–C160, and C178–C185.

The protein belongs to the lambda interferon family.

The protein localises to the secreted. In terms of biological role, cytokine which plays a critical role in the antiviral host defense, predominantly in the epithelial tissues. Acts as a ligand for the heterodimeric class II cytokine receptor composed of IL10RB and IFNLR1, and receptor engagement leads to the activation of the JAK/STAT signaling pathway resulting in the expression of IFN-stimulated genes (ISG), which mediate the antiviral state. Has a restricted receptor distribution and therefore restricted targets: is primarily active in epithelial cells and this cell type-selective action is because of the epithelial cell-specific expression of its receptor IFNLR1. Exhibits antiviral activity against the H5N1 influenza A virus. Induces the expression of the antiviral MX protein in epithelial-rich tissues, such as intestine, trachea and lung. This chain is Interferon lambda-3 (IFNL3), found in Gallus gallus (Chicken).